The sequence spans 343 residues: tRNA N6-adenosine threonylcarbamoyltransferase (343 aa).

The Fe cation site is built by His115 and His119. Residues 137-141 (LVSGG), Asp170, Gly183, Asp187, and Asn276 contribute to the substrate site. Asp306 lines the Fe cation pocket.

The protein belongs to the KAE1 / TsaD family. It depends on Fe(2+) as a cofactor.

The protein resides in the cytoplasm. It carries out the reaction L-threonylcarbamoyladenylate + adenosine(37) in tRNA = N(6)-L-threonylcarbamoyladenosine(37) in tRNA + AMP + H(+). In terms of biological role, required for the formation of a threonylcarbamoyl group on adenosine at position 37 (t(6)A37) in tRNAs that read codons beginning with adenine. Is involved in the transfer of the threonylcarbamoyl moiety of threonylcarbamoyl-AMP (TC-AMP) to the N6 group of A37, together with TsaE and TsaB. TsaD likely plays a direct catalytic role in this reaction. The polypeptide is tRNA N6-adenosine threonylcarbamoyltransferase (Limosilactobacillus reuteri (strain DSM 20016) (Lactobacillus reuteri)).